Here is a 244-residue protein sequence, read N- to C-terminus: Acetoacetate decarboxylase (244 aa).

The active-site Schiff-base intermediate with acetoacetate is the Lys115.

It belongs to the ADC family. In terms of assembly, homododecamer.

It carries out the reaction acetoacetate + H(+) = acetone + CO2. Catalyzes the conversion of acetoacetate to acetone and carbon dioxide. This chain is Acetoacetate decarboxylase, found in Clostridium acetobutylicum (strain ATCC 824 / DSM 792 / JCM 1419 / IAM 19013 / LMG 5710 / NBRC 13948 / NRRL B-527 / VKM B-1787 / 2291 / W).